We begin with the raw amino-acid sequence, 497 residues long: Cytochrome P450 71A16 (497 aa).

A helical transmembrane segment spans residues 1–21 (MEMMILISLCLTTFLTILLFF). Cys439 contacts heme.

This sequence belongs to the cytochrome P450 family. Heme is required as a cofactor.

The protein localises to the membrane. Its function is as follows. Possesses triterpene oxidizing activity. Catalyzes the C23 hydroxylation of marneral to form 23-hydroxymarneral. Catalyzes the C23 hydroxylation of marnerol to form 23-hydroxymarnerol. The chain is Cytochrome P450 71A16 (CYP71A16) from Arabidopsis thaliana (Mouse-ear cress).